Consider the following 222-residue polypeptide: LexA repressor (222 aa).

A DNA-binding region (H-T-H motif) is located at residues 28–48 (IREIGEHMDIRSTNGVNDHLK). Residues Ser-135 and Lys-172 each act as for autocatalytic cleavage activity in the active site.

Belongs to the peptidase S24 family. Homodimer.

The catalysed reaction is Hydrolysis of Ala-|-Gly bond in repressor LexA.. In terms of biological role, represses a number of genes involved in the response to DNA damage (SOS response), including recA and lexA. In the presence of single-stranded DNA, RecA interacts with LexA causing an autocatalytic cleavage which disrupts the DNA-binding part of LexA, leading to derepression of the SOS regulon and eventually DNA repair. This is LexA repressor from Myxococcus xanthus (strain DK1622).